A 456-amino-acid polypeptide reads, in one-letter code: Phospholipase A1 member A (456 aa).

A signal peptide spans 1–25 (MPPDFWERCFWLWGLLLWLSVGSTG). A glycan (N-linked (GlcNAc...) asparagine) is linked at Asn-34. The active-site Nucleophile is the Ser-166. Asp-190 (charge relay system) is an active-site residue. A disulfide bond links Cys-245 and Cys-258. The Charge relay system role is filled by His-260. Cystine bridges form between Cys-282–Cys-293 and Cys-296–Cys-304.

It belongs to the AB hydrolase superfamily. Lipase family.

The protein localises to the secreted. It catalyses the reaction a 1,2-diacyl-sn-glycero-3-phospho-L-serine + H2O = a 2-acyl-sn-glycero-3-phospho-L-serine + a fatty acid + H(+). The enzyme catalyses 1,2-di-(9Z)-octadecenoyl-sn-glycero-3-phospho-L-serine + H2O = 2-(9Z-octadecenoyl)-sn-glycero-3-phospho-L-serine + (9Z)-octadecenoate + H(+). The catalysed reaction is 1-hexadecanoyl-2-(5Z,8Z,11Z,14Z-eicosatetraenoyl)-sn-glycero-3-phospho-L-serine + H2O = 2-(5Z,8Z,11Z,14Z)-eicosatetraenoyl-sn-glycero-3-phospho-L-serine + hexadecanoate + H(+). It carries out the reaction a 1-acyl-sn-glycero-3-phospho-L-serine + H2O = sn-glycero-3-phospho-L-serine + a fatty acid + H(+). It catalyses the reaction 1-(9Z-octadecenoyl)-sn-glycero-3-phospho-L-serine + H2O = sn-glycero-3-phospho-L-serine + (9Z)-octadecenoate + H(+). Functionally, hydrolyzes the ester bond of the acyl group attached at the sn-1 position of phosphatidylserines (phospholipase A1 activity) and 1-acyl-2-lysophosphatidylserines (lysophospholipase activity) in the pathway of phosphatidylserines acyl chain remodeling. Cleaves phosphatidylserines exposed on the outer leaflet of the plasma membrane of apoptotic cells producing 2-acyl-1-lysophosphatidylserines, which in turn enhance mast cell activation and histamine production. Has no activity toward other glycerophospholipids including phosphatidylcholines, phosphatidylethanolamines, phosphatidic acids or phosphatidylinositols, or glycerolipids such as triolein. This is Phospholipase A1 member A (PLA1A) from Bos taurus (Bovine).